Consider the following 506-residue polypeptide: Maturase K (506 aa).

Belongs to the intron maturase 2 family. MatK subfamily.

The protein resides in the plastid. Its subcellular location is the chloroplast. In terms of biological role, usually encoded in the trnK tRNA gene intron. Probably assists in splicing its own and other chloroplast group II introns. In Trifolium repens (Creeping white clover), this protein is Maturase K.